Consider the following 829-residue polypeptide: ATP-dependent RNA helicase drs1 (829 aa).

2 disordered regions span residues 1-96 (MAPS…MDTE) and 145-295 (RRER…MSSF). Residues 20–32 (DNEEDIPLEEEQE) are compositionally biased toward acidic residues. Over residues 48 to 59 (KQKKKNNKKSKK) the composition is skewed to basic residues. The span at 63 to 78 (TEDDDDEAETKEDDAA) shows a compositional bias: acidic residues. Residues 150 to 163 (AAKEGKTTATKEEE) are compositionally biased toward basic and acidic residues. 4 stretches are compositionally biased toward acidic residues: residues 164–190 (DKME…DGVL), 218–228 (DGEDEDSEGED), 235–246 (DEDEGDASDDDS), and 258–271 (QSSD…EEEE). The span at 272–291 (AKMKEFFAPEEENQPKKKGE) shows a compositional bias: basic and acidic residues. Positions 293 to 321 (SSFQEMSLSRPILRGLTSVGFTKPTPIQA) match the Q motif motif. A Helicase ATP-binding domain is found at 324–498 (IPISLMGKDV…RAGLNKPVRI (175 aa)). 337–344 (AVTGSGKT) contributes to the ATP binding site. The DEAD box signature appears at 446 to 449 (DEAD). Residues 528-707 (YLLHICKTIY…EKQLQNMEMQ (180 aa)) form the Helicase C-terminal domain. The interval 728 to 829 (TWFETQEDKK…KGGKGKGRRK (102 aa)) is disordered. The span at 749 to 791 (GVRDKLKSKNEGKLSNKDRKKLDTMQERKQERTYKKGSAERAG) shows a compositional bias: basic and acidic residues. Basic residues predominate over residues 800 to 815 (KVVKKVGRSAGPKKKG).

This sequence belongs to the DEAD box helicase family. DDX27/DRS1 subfamily. Associates with pre-ribosomal particles.

It localises to the nucleus. The protein resides in the nucleolus. The catalysed reaction is ATP + H2O = ADP + phosphate + H(+). ATP-binding RNA helicase involved in ribosome assembly. This chain is ATP-dependent RNA helicase drs1 (drh-11), found in Neurospora crassa (strain ATCC 24698 / 74-OR23-1A / CBS 708.71 / DSM 1257 / FGSC 987).